The sequence spans 216 residues: Probable GTP-binding protein EngB (216 aa).

The region spanning 37-214 is the EngB-type G domain; that stretch reads GSVEIAFAGR…RAAMIRLLDE (178 aa). Residues 45 to 52, 72 to 76, 92 to 95, 159 to 162, and 193 to 195 each bind GTP; these read GRSNVGKS, GRTQE, DMPG, TKAD, and TSS. Mg(2+)-binding residues include S52 and T74.

The protein belongs to the TRAFAC class TrmE-Era-EngA-EngB-Septin-like GTPase superfamily. EngB GTPase family. The cofactor is Mg(2+).

Functionally, necessary for normal cell division and for the maintenance of normal septation. In Rhodopseudomonas palustris (strain ATCC BAA-98 / CGA009), this protein is Probable GTP-binding protein EngB.